A 151-amino-acid chain; its full sequence is MKTKAAVRNMRLEDIDHVYEIEASSFTSPWTKDSFYHELLENPYAHYLVIEKDGHLAGYCGIWIVMDDAQITNIAIKPEYRGQSLGETLFRSAVELCKEKDARRLSLEVRVSNHPAQGLYKKFGMQPGGIRKNYYTDNGEDALIMWVTINE.

An N-acetyltransferase domain is found at 5-150; the sequence is AAVRNMRLED…DALIMWVTIN (146 aa). 74–76 serves as a coordination point for acetyl-CoA; sequence IAI. The Proton acceptor role is filled by Glu108. Asn113 is an acetyl-CoA binding site. Tyr120 (proton donor) is an active-site residue.

The protein belongs to the acetyltransferase family. RimI subfamily.

The protein localises to the cytoplasm. It carries out the reaction N-terminal L-alanyl-[ribosomal protein bS18] + acetyl-CoA = N-terminal N(alpha)-acetyl-L-alanyl-[ribosomal protein bS18] + CoA + H(+). Acetylates the N-terminal alanine of ribosomal protein bS18. In Bacillus subtilis (strain 168), this protein is Putative [ribosomal protein bS18]-alanine N-acetyltransferase (rimI).